The sequence spans 655 residues: Probable replication restart protein PriA (655 aa).

Zn(2+) contacts are provided by cysteine 368, cysteine 371, cysteine 377, cysteine 380, cysteine 396, cysteine 399, cysteine 408, and cysteine 411.

This sequence belongs to the helicase family. PriA subfamily. As to quaternary structure, component of the replication restart primosome. The cofactor is Zn(2+).

Functionally, initiates the restart of stalled replication forks, which reloads the replicative helicase on sites other than the origin of replication. Recognizes and binds to abandoned replication forks and remodels them to uncover a helicase loading site. Promotes assembly of the primosome at these replication forks. This Mycobacterium bovis (strain ATCC BAA-935 / AF2122/97) protein is Probable replication restart protein PriA.